Here is a 487-residue protein sequence, read N- to C-terminus: Glutamate--tRNA ligase 2 (487 aa).

Positions 24–34 match the 'HIGH' region motif; sequence PSPTGFLHIGG. The short motif at 258–262 is the 'KMSKS' region element; that stretch reads KLSKR. Lys261 contributes to the ATP binding site.

Belongs to the class-I aminoacyl-tRNA synthetase family. Glutamate--tRNA ligase type 1 subfamily. In terms of assembly, monomer.

The protein resides in the cytoplasm. The enzyme catalyses tRNA(Glu) + L-glutamate + ATP = L-glutamyl-tRNA(Glu) + AMP + diphosphate. Functionally, catalyzes the attachment of glutamate to tRNA(Glu) in a two-step reaction: glutamate is first activated by ATP to form Glu-AMP and then transferred to the acceptor end of tRNA(Glu). This chain is Glutamate--tRNA ligase 2, found in Novosphingobium aromaticivorans (strain ATCC 700278 / DSM 12444 / CCUG 56034 / CIP 105152 / NBRC 16084 / F199).